The primary structure comprises 189 residues: Apolipophorin-3 (189 aa).

The signal sequence occupies residues 1 to 18; the sequence is MAAKFVVVLAACVALSHS. A propeptide spanning residues 19–23 is cleaved from the precursor; the sequence is AMVRR.

Belongs to the insect apolipophorin-3 family. In terms of assembly, equilibrium between a soluble monomer and a bound lipoprotein form. Apolipophorin-3 associates with lipophorin during lipid loading until each particle contains 9 or 14 molecules of apolipophorin-3. Hemolymph.

It is found in the secreted. In terms of biological role, assists in the loading of diacylglycerol, generated from triacylglycerol stores in the fat body through the action of adipokinetic hormone, into lipophorin, the hemolymph lipoprotein. It increases the lipid carrying capacity of lipophorin by covering the expanding hydrophobic surface resulting from diacylglycerol uptake. It thus plays a critical role in the transport of lipids during flight in several species of insects. This is Apolipophorin-3 from Manduca sexta (Tobacco hawkmoth).